We begin with the raw amino-acid sequence, 362 residues long: Red-sensitive opsin (362 aa).

Residues 1–49 (MAAWEAAFAARRRHEEEDTTRDSVFTYTNSNNTRGPFEGPNYHIAPRWV) are Extracellular-facing. Asparagine 31 carries an N-linked (GlcNAc...) asparagine glycan. A helical membrane pass occupies residues 50-74 (YNLTSVWMIFVVAASVFTNGLVLVA). Topologically, residues 75-86 (TWKFKKLRHPLN) are cytoplasmic. The helical transmembrane segment at 87-112 (WILVNLAVADLGETVIASTISVINQI) threads the bilayer. The Extracellular segment spans residues 113–126 (SGYFILGHPMCVVE). A disulfide bond links cysteine 123 and cysteine 200. Residues 127-146 (GYTVSACGITALWSLAIISW) traverse the membrane as a helical segment. At 147–165 (ERWFVVCKPFGNIKFDGKL) the chain is on the cytoplasmic side. A helical transmembrane segment spans residues 166 to 189 (AVAGILFSWLWSCAWTAPPIFGWS). Topologically, residues 190–215 (RYWPHGLKTSCGPDVFSGSSDPGVQS) are extracellular. A helical transmembrane segment spans residues 216 to 243 (YMVVLMVTCCFFPLAIIILCYLQVWLAI). The Cytoplasmic segment spans residues 244–265 (RAVAAQQKESESTQKAEKEVSR). The helical transmembrane segment at 266 to 289 (MVVVMIVAYCFCWGPYTFFACFAA) threads the bilayer. Over 290 to 297 (ANPGYAFH) the chain is Extracellular. Residues 298 to 322 (PLAAALPAYFAKSATIYNPIIYVFM) traverse the membrane as a helical segment. At lysine 309 the chain carries N6-(retinylidene)lysine. Residues 323-362 (NRQFRNCILQLFGKKVDDGSEVSTSRTEVSSVSNSSVSPA) are Cytoplasmic-facing.

Belongs to the G-protein coupled receptor 1 family. Opsin subfamily. Phosphorylated on some or all of the serine and threonine residues present in the C-terminal region. As to expression, the color pigments are found in the cone photoreceptor cells.

It is found in the membrane. Its function is as follows. Visual pigments are the light-absorbing molecules that mediate vision. They consist of an apoprotein, opsin, covalently linked to cis-retinal. This chain is Red-sensitive opsin, found in Gallus gallus (Chicken).